Here is a 444-residue protein sequence, read N- to C-terminus: tRNA-2-methylthio-N(6)-dimethylallyladenosine synthase (444 aa).

The MTTase N-terminal domain occupies 2–119 (KKVYIKTFGC…LPDLIESRKQ (118 aa)). Residues C11, C48, C82, C156, C160, and C163 each contribute to the [4Fe-4S] cluster site. Residues 142–374 (KVDGGAAFVS…NEVIEAKGYA (233 aa)) enclose the Radical SAM core domain. In terms of domain architecture, TRAM spans 377–440 (QSMVGTVQRV…PHSLAGEALT (64 aa)).

It belongs to the methylthiotransferase family. MiaB subfamily. As to quaternary structure, monomer. Requires [4Fe-4S] cluster as cofactor.

It localises to the cytoplasm. The enzyme catalyses N(6)-dimethylallyladenosine(37) in tRNA + (sulfur carrier)-SH + AH2 + 2 S-adenosyl-L-methionine = 2-methylsulfanyl-N(6)-dimethylallyladenosine(37) in tRNA + (sulfur carrier)-H + 5'-deoxyadenosine + L-methionine + A + S-adenosyl-L-homocysteine + 2 H(+). In terms of biological role, catalyzes the methylthiolation of N6-(dimethylallyl)adenosine (i(6)A), leading to the formation of 2-methylthio-N6-(dimethylallyl)adenosine (ms(2)i(6)A) at position 37 in tRNAs that read codons beginning with uridine. This Chromobacterium violaceum (strain ATCC 12472 / DSM 30191 / JCM 1249 / CCUG 213 / NBRC 12614 / NCIMB 9131 / NCTC 9757 / MK) protein is tRNA-2-methylthio-N(6)-dimethylallyladenosine synthase.